A 149-amino-acid chain; its full sequence is Large ribosomal subunit protein bL9 (149 aa).

Belongs to the bacterial ribosomal protein bL9 family.

Functionally, binds to the 23S rRNA. In Geobacillus stearothermophilus (Bacillus stearothermophilus), this protein is Large ribosomal subunit protein bL9 (rplI).